The following is a 590-amino-acid chain: DNA primase (590 aa).

The CHC2-type zinc-finger motif lies at 37-61 (CPFHKEKTPSFSVSPTKQFYHCFSC). The Toprim domain maps to 255–337 (GRILVVEGYM…DKSLHFLFLP (83 aa)). Mg(2+) contacts are provided by glutamate 261, aspartate 305, and aspartate 307.

This sequence belongs to the DnaG primase family. As to quaternary structure, monomer. Interacts with DnaB. The cofactor is Zn(2+). It depends on Mg(2+) as a cofactor.

It catalyses the reaction ssDNA + n NTP = ssDNA/pppN(pN)n-1 hybrid + (n-1) diphosphate.. In terms of biological role, RNA polymerase that catalyzes the synthesis of short RNA molecules used as primers for DNA polymerase during DNA replication. This Neisseria meningitidis serogroup B (strain ATCC BAA-335 / MC58) protein is DNA primase.